A 216-amino-acid chain; its full sequence is Probable GTP-binding protein EngB (216 aa).

In terms of domain architecture, EngB-type G spans 37-214; it reads QGLEVAFAGR…RAAIIKLVAE (178 aa). GTP is bound by residues 45-52, 72-76, 92-95, 159-162, and 193-195; these read GRSNVGKS, GRTQE, DMPG, TKAD, and TSS. Mg(2+) is bound by residues serine 52 and threonine 74.

Belongs to the TRAFAC class TrmE-Era-EngA-EngB-Septin-like GTPase superfamily. EngB GTPase family. Requires Mg(2+) as cofactor.

Necessary for normal cell division and for the maintenance of normal septation. The sequence is that of Probable GTP-binding protein EngB from Rhodopseudomonas palustris (strain BisA53).